The chain runs to 890 residues: Translation initiation factor IF-2 (890 aa).

The segment at 45 to 304 (LIDHLNQKNS…LQQGFQKPAQ (260 aa)) is disordered. Positions 67–81 (STLNIPGTGGKSKSV) are enriched in polar residues. A compositionally biased stretch (basic and acidic residues) spans 92-217 (VKRDPQEAER…RMAEENKWTD (126 aa)). Over residues 252 to 266 (GRGRNAKAARPKKGN) the composition is skewed to basic residues. Positions 267 to 280 (KHAESKADREEARA) are enriched in basic and acidic residues. One can recognise a tr-type G domain in the interval 389-558 (PRAPVVTIMG…LLQAEVLELK (170 aa)). The tract at residues 398-405 (GHVDHGKT) is G1. 398–405 (GHVDHGKT) serves as a coordination point for GTP. The G2 stretch occupies residues 423-427 (GITQH). Positions 444 to 447 (DTPG) are G3. GTP-binding positions include 444 to 448 (DTPGH) and 498 to 501 (NKID). Residues 498–501 (NKID) are G4. The tract at residues 534-536 (SAK) is G5. Lys-808 carries the post-translational modification N6-acetyllysine.

It belongs to the TRAFAC class translation factor GTPase superfamily. Classic translation factor GTPase family. IF-2 subfamily.

The protein resides in the cytoplasm. One of the essential components for the initiation of protein synthesis. Protects formylmethionyl-tRNA from spontaneous hydrolysis and promotes its binding to the 30S ribosomal subunits. Also involved in the hydrolysis of GTP during the formation of the 70S ribosomal complex. In Escherichia coli O127:H6 (strain E2348/69 / EPEC), this protein is Translation initiation factor IF-2.